Reading from the N-terminus, the 304-residue chain is Galactofuranosyltransferase GlfT1 (304 aa).

This sequence belongs to the glycosyltransferase 2 family. As to quaternary structure, is probably part of an AG biosynthetic complex.

Its subcellular location is the cell membrane. It localises to the secreted. The protein resides in the cell wall. It carries out the reaction alpha-L-rhamnosyl-(1-&gt;3)-N-acetyl-alpha-D-glucosaminyl-diphospho-trans,octa-cis-decaprenol + 2 UDP-alpha-D-galactofuranose = beta-D-galactofuranosyl-(1-&gt;5)-beta-D-galactofuranosyl-(1-&gt;4)-alpha-L-rhamnosyl-(1-&gt;3)-N-acetyl-alpha-D-glucosaminyl-diphospho-trans,octa-cis-decaprenol + 2 UDP + 2 H(+). The protein operates within cell wall biogenesis; cell wall polysaccharide biosynthesis. Involved in the biosynthesis of the arabinogalactan (AG) region of the mycolylarabinogalactan-peptidoglycan (mAGP) complex, an essential component of the mycobacterial cell wall. Catalyzes the transfer of the first two galactofuranosyl (Galf) units from UDP-galactofuranose (UDP-Galf) onto the rhamnosyl-GlcNAc-diphospho-decaprenol (Rha-GlcNAc-PP-C50) acceptor, yielding galactofuranosyl-galactofuranosyl-rhamnosyl-GlcNAc-diphospho-decaprenol (Galf-Galf-Rha-GlcNAc-PP-C50). Thus, GlfT1 is the initiator of galactan synthesis, while GlfT2 continues with the subsequent polymerization events. This Mycobacterium tuberculosis (strain CDC 1551 / Oshkosh) protein is Galactofuranosyltransferase GlfT1.